Here is a 307-residue protein sequence, read N- to C-terminus: Bifunctional protein FolD (307 aa).

NADP(+) is bound by residues 170-172 (GRS), Ser195, and Ile236.

It belongs to the tetrahydrofolate dehydrogenase/cyclohydrolase family. As to quaternary structure, homodimer.

It catalyses the reaction (6R)-5,10-methylene-5,6,7,8-tetrahydrofolate + NADP(+) = (6R)-5,10-methenyltetrahydrofolate + NADPH. It carries out the reaction (6R)-5,10-methenyltetrahydrofolate + H2O = (6R)-10-formyltetrahydrofolate + H(+). It functions in the pathway one-carbon metabolism; tetrahydrofolate interconversion. Functionally, catalyzes the oxidation of 5,10-methylenetetrahydrofolate to 5,10-methenyltetrahydrofolate and then the hydrolysis of 5,10-methenyltetrahydrofolate to 10-formyltetrahydrofolate. The sequence is that of Bifunctional protein FolD from Sinorhizobium fredii (strain NBRC 101917 / NGR234).